The chain runs to 206 residues: Outer-membrane lipoprotein carrier protein (206 aa).

An N-terminal signal peptide occupies residues 1–20 (MFYLIKKLPKFILFSLYLYA).

Belongs to the LolA family. As to quaternary structure, monomer.

Its subcellular location is the periplasm. Participates in the translocation of lipoproteins from the inner membrane to the outer membrane. Only forms a complex with a lipoprotein if the residue after the N-terminal Cys is not an aspartate (The Asp acts as a targeting signal to indicate that the lipoprotein should stay in the inner membrane). The chain is Outer-membrane lipoprotein carrier protein from Wigglesworthia glossinidia brevipalpis.